The sequence spans 1544 residues: Lysine-specific demethylase 5B (1544 aa).

The region spanning 32-73 (CPVFEPSWEEFADPFAFIHKIRPIAEQTGICKVRPPPDWQPP) is the JmjN domain. Residues 97 to 187 (TRVKLNFLDQ…ILNPYNLFLS (91 aa)) enclose the ARID domain. Residues lysine 148, lysine 204, lysine 209, lysine 242, lysine 274, and lysine 278 each participate in a glycyl lysine isopeptide (Lys-Gly) (interchain with G-Cter in SUMO2) cross-link. A disordered region spans residues 201-230 (TDTKDKEYKPHDIPQRQSVQPSETCPPARR). A compositionally biased stretch (basic and acidic residues) spans 202–214 (DTKDKEYKPHDIP). The segment at 309–359 (LYVCLLCGSGNDEDRLLLCDGCDDSYHTFCLIPPLHDVPKGDWRCPKCLAQ) adopts a PHD-type 1 zinc-finger fold. 2-oxoglutarate is bound at residue tyrosine 425. The JmjC domain maps to 453–619 (EYLDSGWNLN…LGRQCVEHYR (167 aa)). Histidine 499 and glutamate 501 together coordinate Fe cation. Residues serine 507, asparagine 509, and lysine 517 each coordinate 2-oxoglutarate. A Fe cation-binding site is contributed by histidine 587. The C5HC2 zinc finger occupies 692-744 (CVKCKTTCFMSAISCSCKPGLLVCLHHVKELCSCPPYKYKLRYRYTLDDLYPM). A Glycyl lysine isopeptide (Lys-Gly) (interchain with G-Cter in SUMO2) cross-link involves residue lysine 769. Lysine 832 bears the N6-acetyllysine mark. A Phosphoserine modification is found at serine 986. A PHD-type 2 zinc finger spans residues 1176–1224 (IKICLCQKAPAAPMIQCELCRDAFHTSCVAVPSISQGLRIWLCPHCRRS). The residue at position 1328 (serine 1328) is a Phosphoserine. Residues 1374 to 1400 (PSPAQQTDRSSPVRPSSEKNDCCRGKR) are disordered. Residues 1376-1387 (PAQQTDRSSPVR) are compositionally biased toward polar residues. Positions 1389 to 1400 (SSEKNDCCRGKR) are enriched in basic and acidic residues. Lysine 1450 participates in a covalent cross-link: Glycyl lysine isopeptide (Lys-Gly) (interchain with G-Cter in SUMO2). Serine 1456 bears the Phosphoserine mark. Residues 1484 to 1538 (DAICPAVSCLQPEGDEVDWVQCDGSCNQWFHQVCVGVSPEMAEKEDYICVRCTVK) form a PHD-type 3 zinc finger.

It belongs to the JARID1 histone demethylase family. In terms of assembly, interacts with FOXG1B, PAX9, MYC, MYCN and RB1. Interacts with HDAC1, HDAC4, HDAC5 and HDAC7. Interacts (via PHD-type 1 zinc finger) with histone H3 unmodified at 'Lys-4'; the interaction is inhibited when histone H3 is methylated at 'Arg-2' or 'Lys-4'. Fe(2+) serves as cofactor. In terms of tissue distribution, ubiquitously expressed, with highest levels in testis. Down-regulated in melanoma and glioblastoma. Up-regulated in breast cancer (at protein level).

The protein localises to the nucleus. It carries out the reaction N(6),N(6),N(6)-trimethyl-L-lysyl(4)-[histone H3] + 3 2-oxoglutarate + 3 O2 = L-lysyl(4)-[histone H3] + 3 formaldehyde + 3 succinate + 3 CO2. Its activity is regulated as follows. Several specific inhibitors are being developed and tested. The inhibitor KDOAM-25 inhibits its demethylase activity, resulting to cell cycle arrest in myeloma cells. Histone demethylase that demethylates 'Lys-4' of histone H3, thereby playing a central role in histone code. Does not demethylate histone H3 'Lys-9' or H3 'Lys-27'. Demethylates trimethylated, dimethylated and monomethylated H3 'Lys-4'. Acts as a transcriptional corepressor for FOXG1B and PAX9. Favors the proliferation of breast cancer cells by repressing tumor suppressor genes such as BRCA1 and HOXA5. In contrast, may act as a tumor suppressor for melanoma. Represses the CLOCK-BMAL1 heterodimer-mediated transcriptional activation of the core clock component PER2. The polypeptide is Lysine-specific demethylase 5B (KDM5B) (Homo sapiens (Human)).